We begin with the raw amino-acid sequence, 103 residues long: Small ribosomal subunit protein eS24 (103 aa).

Belongs to the eukaryotic ribosomal protein eS24 family.

In Methanococcus maripaludis (strain C6 / ATCC BAA-1332), this protein is Small ribosomal subunit protein eS24.